A 308-amino-acid chain; its full sequence is Ectoine dioxygenase (308 aa).

Gln131 provides a ligand contact to L-ectoine. Lys137 lines the 2-oxoglutarate pocket. His148, Asp150, and His249 together coordinate Fe cation.

It belongs to the PhyH family. EctD subfamily. In terms of assembly, homodimer. Fe(2+) is required as a cofactor.

The enzyme catalyses L-ectoine + 2-oxoglutarate + O2 = 5-hydroxyectoine + succinate + CO2. Functionally, involved in the biosynthesis of 5-hydroxyectoine, called compatible solute, which helps organisms to survive extreme osmotic stress by acting as a highly soluble organic osmolyte. Catalyzes the 2-oxoglutarate-dependent selective hydroxylation of L-ectoine to yield (4S,5S)-5-hydroxyectoine. The protein is Ectoine dioxygenase of Bordetella bronchiseptica (strain ATCC BAA-588 / NCTC 13252 / RB50) (Alcaligenes bronchisepticus).